A 168-amino-acid polypeptide reads, in one-letter code: MKSLNRQTVSMFKKLSVPAAIMMILSTIISGIGTFLHYKEELMPSACANGWIQYDKHCYLDTNIKMSTDNAVYQCRKLRARLPRPDTRHLRVLFSIFYKDYWVSLKKTNNKWLDINNDKDIDISKLTNFKQLNSTTDAEACYIYKSGKLVKTVCKSTQSVLCVKKFYK.

At 1–14 (MKSLNRQTVSMFKK) the chain is on the intravirion side. A helical membrane pass occupies residues 15 to 37 (LSVPAAIMMILSTIISGIGTFLH). The Virion surface portion of the chain corresponds to 38 to 168 (YKEELMPSAC…SVLCVKKFYK (131 aa)). A C-type lectin domain is found at 54–163 (YDKHCYLDTN…CKSTQSVLCV (110 aa)). Intrachain disulfides connect cysteine 75-cysteine 162 and cysteine 141-cysteine 154. N-linked (GlcNAc...) asparagine; by host glycosylation is present at asparagine 133.

This sequence belongs to the orthopoxvirus OPG162 protein family. Interacts with protein OPG161. Interacts with protein OPG164. Interacts with protein OPG190.

The protein resides in the virion membrane. The protein localises to the host Golgi apparatus. Functionally, forms a complex with OPG162 and OPG190 to coordinate the incorporation of OPG164 into wrapped enveloped virion (EV) membranes and, subsequently, the production of actin tails. Therefore plays an essential role in efficient cell-to-cell spread of viral particles. This chain is Protein OPG162 (OPG162), found in Homo sapiens (Human).